The chain runs to 152 residues: Xanthine-guanine phosphoribosyltransferase (152 aa).

Residues 37 to 38 (RG), Arg-69, and 88 to 96 (DDLVDTGGT) contribute to the 5-phospho-alpha-D-ribose 1-diphosphate site. Arg-69 is a binding site for GMP. Residue Asp-89 participates in Mg(2+) binding. Guanine is bound by residues Asp-92 and Ile-135. Asp-92 and Ile-135 together coordinate xanthine. GMP is bound by residues 92-96 (DTGGT) and 134-135 (WI).

Belongs to the purine/pyrimidine phosphoribosyltransferase family. XGPT subfamily. In terms of assembly, homotetramer. Mg(2+) is required as a cofactor.

The protein resides in the cell inner membrane. It catalyses the reaction GMP + diphosphate = guanine + 5-phospho-alpha-D-ribose 1-diphosphate. It carries out the reaction XMP + diphosphate = xanthine + 5-phospho-alpha-D-ribose 1-diphosphate. The enzyme catalyses IMP + diphosphate = hypoxanthine + 5-phospho-alpha-D-ribose 1-diphosphate. It functions in the pathway purine metabolism; GMP biosynthesis via salvage pathway; GMP from guanine: step 1/1. It participates in purine metabolism; XMP biosynthesis via salvage pathway; XMP from xanthine: step 1/1. Its function is as follows. Purine salvage pathway enzyme that catalyzes the transfer of the ribosyl-5-phosphate group from 5-phospho-alpha-D-ribose 1-diphosphate (PRPP) to the N9 position of the 6-oxopurines guanine and xanthine to form the corresponding ribonucleotides GMP (guanosine 5'-monophosphate) and XMP (xanthosine 5'-monophosphate), with the release of PPi. To a lesser extent, also acts on hypoxanthine. The chain is Xanthine-guanine phosphoribosyltransferase from Pectobacterium carotovorum subsp. carotovorum (strain PC1).